Consider the following 299-residue polypeptide: ClpXP adapter protein SpxH (299 aa).

It belongs to the SpxH family. Interacts with Spx. Interacts with SpxO/YuzO.

The protein resides in the cytoplasm. Its activity is regulated as follows. Irreversible aggregation upon several stress conditions prevents interaction with Spx and therefore leads to Spx stabilization. Inhibited by interaction with SpxO/YuzO. Functionally, adapter protein required for efficient degradation of Spx by ClpXP under non-stress conditions. Interaction with Spx stabilizes Spx and exposes the C-terminus of Spx for recognition and proteolysis by ClpXP. Is specific for Spx and does not enhance proteolysis by ClpCP protease. Probably binds 2 zinc ions. This Bacillus subtilis (strain 168) protein is ClpXP adapter protein SpxH.